A 152-amino-acid chain; its full sequence is 6,7-dimethyl-8-ribityllumazine synthase (152 aa).

5-amino-6-(D-ribitylamino)uracil-binding positions include phenylalanine 22, 54 to 56 (AFE), and 78 to 80 (AVI). Residue 83-84 (ET) coordinates (2S)-2-hydroxy-3-oxobutyl phosphate. The active-site Proton donor is histidine 86. Phenylalanine 111 is a 5-amino-6-(D-ribitylamino)uracil binding site. Residue arginine 125 participates in (2S)-2-hydroxy-3-oxobutyl phosphate binding.

This sequence belongs to the DMRL synthase family.

The catalysed reaction is (2S)-2-hydroxy-3-oxobutyl phosphate + 5-amino-6-(D-ribitylamino)uracil = 6,7-dimethyl-8-(1-D-ribityl)lumazine + phosphate + 2 H2O + H(+). It participates in cofactor biosynthesis; riboflavin biosynthesis; riboflavin from 2-hydroxy-3-oxobutyl phosphate and 5-amino-6-(D-ribitylamino)uracil: step 1/2. Functionally, catalyzes the formation of 6,7-dimethyl-8-ribityllumazine by condensation of 5-amino-6-(D-ribitylamino)uracil with 3,4-dihydroxy-2-butanone 4-phosphate. This is the penultimate step in the biosynthesis of riboflavin. This Limosilactobacillus reuteri (strain DSM 20016) (Lactobacillus reuteri) protein is 6,7-dimethyl-8-ribityllumazine synthase.